The chain runs to 977 residues: MSVRLPLLLRQLGRQQLPSGPACRLRELCRSGSRSSSSGGGDPEGLRGRRLQDGQTFSSHGPGNPEAPGMDSIVRDVIHNSKEVLSLLQEKNPAFKPVLVVIQAGDDNLMKDMNQNLAKEAGLDITHICLPPDSGEDEIIDEILKINEDPRVHGLTLQISEDSLSNKVLNALKPEKDVDGVTDINLGKLVRGDAPECFVSPLAKAAVELVEKSGITLDGKKVLVVGAHGPLEAALQWLFQRKGSMTMSCPWATPQLPDKLREADIVVLGSPKPEEIPAVWIPSGTTILNCFHDFLSGKLSGGSPGVPVDKLIAEESVSLLAAALRIQNMVSSGRRWLREQQHRRWRLHCLKLQPLSPVPSDIEISRGQTPKAVDVLAKEIGLLADEIEIYGKSKAKVQLSLLERLKDQTDGKYVLVAGITPTPLGEGKSTVTIGLVQALTAHLKVNSFACLRQPSQGPTFGVKGGAAGGGYAQVIPMEEFNLHLTGDIHAITAANNLLAAAIDTRILHESTQTDKALYNRLVPLVNGVREFSEIQLSRLKKLGIHKTDPSTLTEEEVRKFARLNIDPATITWQRVLDTNDRFLRKITIGQGSTEKGYSRQAQFDIAVASEIMAVLALTDSLTDMKERLGRMVVASDKDGQPVTAEDLGVTGALTVLMKDAIKPNLMQTLEGTPVFVHAGPFANIAHGNSSVLADKIALKLVGEEGFVVTEAGFGADIGMEKFFNIKCRASGLVPNVVVLVATVRALKMHGGGPSVTAGVPLKKEYTEENIQLVADGCCNLQKQIQIAQLFGVPVVVALNVFKTDTRAEIDLVCELAKRAGAFDAVPCYHWSAGGKGSVDLARAVREAANKRSRFQFLYDVQLPIVEKIRVIAQTVYGAKDIELSPEAQSKIDRYTQQGFGNLPICMAKTHLSLSHEPDKKGVPRDFTLPISDVRASIGAGFIYPLVGTMSTMPGLPTRPCFYDIDLDTETEQVKGLF.

The transit peptide at 1–31 (MSVRLPLLLRQLGRQQLPSGPACRLRELCRS) directs the protein to the mitochondrion. The tract at residues 29–71 (CRSGSRSSSSGGGDPEGLRGRRLQDGQTFSSHGPGNPEAPGMD) is disordered. Positions 32-347 (GSRSSSSGGG…REQQHRRWRL (316 aa)) are methylenetetrahydrofolate dehydrogenase and cyclohydrolase. Lys-188 is subject to N6-acetyllysine; alternate. An N6-succinyllysine; alternate modification is found at Lys-188. Residues 348-977 (HCLKLQPLSP…TETEQVKGLF (630 aa)) form a formyltetrahydrofolate synthetase region. Ser-356 bears the Phosphoserine mark. 422-429 (TPLGEGKS) contributes to the ATP binding site. Residue Lys-595 is modified to N6-succinyllysine.

In the N-terminal section; belongs to the tetrahydrofolate dehydrogenase/cyclohydrolase family. It in the C-terminal section; belongs to the formate--tetrahydrofolate ligase family. Homodimer.

It is found in the mitochondrion. It catalyses the reaction (6S)-5,6,7,8-tetrahydrofolate + formate + ATP = (6R)-10-formyltetrahydrofolate + ADP + phosphate. It functions in the pathway one-carbon metabolism; tetrahydrofolate interconversion. May provide the missing metabolic reaction required to link the mitochondria and the cytoplasm in the mammalian model of one-carbon folate metabolism complementing thus the enzymatic activities of MTHFD2. The sequence is that of Monofunctional C1-tetrahydrofolate synthase, mitochondrial (Mthfd1l) from Mus musculus (Mouse).